The following is a 1183-amino-acid chain: 3-hydroxy-3-methylglutaryl-coenzyme A reductase (1183 aa).

At 1 to 245 (MAAILLPQRF…DLLKNAETLD (245 aa)) the chain is on the cytoplasmic side. An SSD domain is found at 245-426 (DIVIMLLGYI…FTFYTAILSI (182 aa)). Residues 246–266 (IVIMLLGYIAMHLTFVSLFLS) form a helical membrane-spanning segment. The Lumenal portion of the chain corresponds to 267-273 (MRKMGSK). Residues 274–294 (FWLGICTLFSSVFAFLFGLVV) traverse the membrane as a helical segment. The Cytoplasmic segment spans residues 295-299 (TTKLG). The helical transmembrane segment at 300–320 (VPISVILLSEGLPFLVVTIGF) threads the bilayer. Over 321 to 378 (EKNIVLTRAVMSHAIEHRRIQAQNSKSGKRSPERSTQNMIQYAVQAAIKEKGFEIIRD) the chain is Lumenal. Residues 379–399 (YAIEIVILVIGAASGVQGGLQ) form a helical membrane-spanning segment. The Cytoplasmic segment spans residues 400–402 (QFC). The chain crosses the membrane as a helical span at residues 403–423 (FLAAWTLFFDFILLFTFYTAI). Residues 424–482 (LSIKLEINRIKRHVDMRMALEDDGVSRRVAENVAKGDDELNRVRGDAPLFGRKSSSIPK) lie on the Lumenal side of the membrane. A helical transmembrane segment spans residues 483–503 (FKVLMILGFIFVNIVNICSIP). Residues 504-1183 (FRNPSSMSTI…SAAAIQRSKR (680 aa)) lie on the Cytoplasmic side of the membrane. Glu-828 serves as the catalytic Charge relay system. 834–840 (SASRGCK) is a CoA binding site. NADP(+)-binding positions include 895 to 897 (SRF) and 922 to 930 (DAMGMNMIS). The Charge relay system role is filled by Lys-962. 991 to 993 (VLK) lines the CoA pocket. Residue Asp-1038 is the Charge relay system of the active site. 1133–1134 (AH) is a CoA binding site. His-1134 functions as the Proton donor in the catalytic mechanism. Positions 1136 to 1183 (QHNRSAAPSRSTTPAPPMTPVSLAMTSAQERSASTTSMSAAAIQRSKR) are disordered. Residue 1138–1139 (NR) coordinates NADP(+). Composition is skewed to low complexity over residues 1139–1148 (RSAAPSRSTT) and 1167–1177 (SASTTSMSAAA).

This sequence belongs to the HMG-CoA reductase family.

It localises to the endoplasmic reticulum membrane. The enzyme catalyses (R)-mevalonate + 2 NADP(+) + CoA = (3S)-3-hydroxy-3-methylglutaryl-CoA + 2 NADPH + 2 H(+). It participates in metabolic intermediate biosynthesis; (R)-mevalonate biosynthesis; (R)-mevalonate from acetyl-CoA: step 3/3. Its function is as follows. HMG-CoA reductase; part of the first module of ergosterol biosynthesis pathway that includes the early steps of the pathway, conserved across all eukaryotes, and which results in the formation of mevalonate from acetyl-coenzyme A (acetyl-CoA). In this module, the cytosolic acetyl-CoA acetyltransferase catalyzes the formation of acetoacetyl-CoA. The hydroxymethylglutaryl-CoA synthase then condenses acetyl-CoA with acetoacetyl-CoA to form HMG-CoA. The rate-limiting step of the early module is the reduction to mevalonate by the 3-hydroxy-3-methylglutaryl-coenzyme A (HMG-CoA) reductase HMGR. This Gibberella fujikuroi (strain CBS 195.34 / IMI 58289 / NRRL A-6831) (Bakanae and foot rot disease fungus) protein is 3-hydroxy-3-methylglutaryl-coenzyme A reductase (HMGR).